Reading from the N-terminus, the 569-residue chain is Urease subunit beta (569 aa).

Positions 131 to 569 constitute a Urease domain; the sequence is GGIDTHIHFI…VSLAQLFSIF (439 aa). Histidine 136, histidine 138, and lysine 219 together coordinate Ni(2+). At lysine 219 the chain carries N6-carboxylysine. Residue histidine 221 coordinates substrate. 2 residues coordinate Ni(2+): histidine 248 and histidine 274. Histidine 322 acts as the Proton donor in catalysis. Aspartate 362 provides a ligand contact to Ni(2+).

It belongs to the metallo-dependent hydrolases superfamily. Urease alpha subunit family. Heterohexamer of 3 UreA (alpha) and 3 UreB (beta) subunits. Ni cation serves as cofactor. Carboxylation allows a single lysine to coordinate two nickel ions.

Its subcellular location is the cytoplasm. The catalysed reaction is urea + 2 H2O + H(+) = hydrogencarbonate + 2 NH4(+). It participates in nitrogen metabolism; urea degradation; CO(2) and NH(3) from urea (urease route): step 1/1. In Helicobacter pylori (strain Shi470), this protein is Urease subunit beta.